Consider the following 89-residue polypeptide: MEYQYPLDYDWSNEEMVTMVKFYEAIEKAYEKGIIREELMELYRRFKEIVPSKAEEKKIDKEFQEVSGYSIYRAIQRAKEIEEQKLVKM.

It belongs to the UPF0223 family.

The sequence is that of UPF0223 protein BCA_4066 from Bacillus cereus (strain 03BB102).